The primary structure comprises 488 residues: Probable glycine dehydrogenase (decarboxylating) subunit 2 (488 aa).

At K274 the chain carries N6-(pyridoxal phosphate)lysine.

Belongs to the GcvP family. C-terminal subunit subfamily. In terms of assembly, the glycine cleavage system is composed of four proteins: P, T, L and H. In this organism, the P 'protein' is a heterodimer of two subunits. It depends on pyridoxal 5'-phosphate as a cofactor.

The catalysed reaction is N(6)-[(R)-lipoyl]-L-lysyl-[glycine-cleavage complex H protein] + glycine + H(+) = N(6)-[(R)-S(8)-aminomethyldihydrolipoyl]-L-lysyl-[glycine-cleavage complex H protein] + CO2. In terms of biological role, the glycine cleavage system catalyzes the degradation of glycine. The P protein binds the alpha-amino group of glycine through its pyridoxal phosphate cofactor; CO(2) is released and the remaining methylamine moiety is then transferred to the lipoamide cofactor of the H protein. This is Probable glycine dehydrogenase (decarboxylating) subunit 2 from Listeria monocytogenes serovar 1/2a (strain ATCC BAA-679 / EGD-e).